Consider the following 233-residue polypeptide: Snake venom serine protease ussurase (233 aa).

The Peptidase S1 domain maps to 1-224 (VIGGVECNIN…YTDWIQSIIS (224 aa)). 6 disulfide bridges follow: Cys-7/Cys-138, Cys-25/Cys-41, Cys-73/Cys-231, Cys-117/Cys-185, Cys-149/Cys-164, and Cys-175/Cys-200. The active-site Charge relay system is the His-40. N-linked (GlcNAc...) asparagine glycosylation is present at Asn-54. The active-site Charge relay system is the Asp-85. Ser-179 functions as the Charge relay system in the catalytic mechanism.

The protein belongs to the peptidase S1 family. Snake venom subfamily. As to quaternary structure, monomer. Expressed by the venom gland.

The protein resides in the secreted. Functionally, snake venom serine protease that may act in the hemostasis system of the prey. This is Snake venom serine protease ussurase from Gloydius ussuriensis (Ussuri mamushi).